The primary structure comprises 225 residues: Probable septum site-determining protein MinC (225 aa).

The tract at residues 87–112 (PTHMASPQGNSSKTRSSDTQPKPKTP) is disordered. A compositionally biased stretch (polar residues) spans 91–108 (ASPQGNSSKTRSSDTQPK).

The protein belongs to the MinC family. As to quaternary structure, interacts with MinD and FtsZ.

In terms of biological role, cell division inhibitor that blocks the formation of polar Z ring septums. Rapidly oscillates between the poles of the cell to destabilize FtsZ filaments that have formed before they mature into polar Z rings. Prevents FtsZ polymerization. This chain is Probable septum site-determining protein MinC, found in Prochlorococcus marinus (strain MIT 9313).